The primary structure comprises 235 residues: Ribonuclease 3 (235 aa).

The RNase III domain maps to 11–137; sequence RAWCAEALGY…VVGALYLDGG (127 aa). Glutamate 51 is a binding site for Mg(2+). Residue aspartate 55 is part of the active site. Positions 123 and 126 each coordinate Mg(2+). Glutamate 126 is an active-site residue. The 70-residue stretch at 164 to 233 folds into the DRBM domain; it reads DYKTQLQEQL…ARQALMPEHH (70 aa).

This sequence belongs to the ribonuclease III family. In terms of assembly, homodimer. It depends on Mg(2+) as a cofactor.

It localises to the cytoplasm. It carries out the reaction Endonucleolytic cleavage to 5'-phosphomonoester.. Digests double-stranded RNA. Involved in the processing of primary rRNA transcript to yield the immediate precursors to the large and small rRNAs (23S and 16S). Processes some mRNAs, and tRNAs when they are encoded in the rRNA operon. Processes pre-crRNA and tracrRNA of type II CRISPR loci if present in the organism. In Symbiobacterium thermophilum (strain DSM 24528 / JCM 14929 / IAM 14863 / T), this protein is Ribonuclease 3.